The following is an 850-amino-acid chain: PH domain-containing protein YHR131C (850 aa).

The PH domain occupies R194 to S306. Basic residues predominate over residues R324–H338. Disordered regions lie at residues R324 to S348, S406 to S428, S451 to V494, E583 to S659, and T793 to A850. Low complexity predominate over residues S406–S416. The segment covering T417–S428 has biased composition (polar residues). Basic and acidic residues predominate over residues H479–E489. The span at E605–L619 shows a compositional bias: polar residues. 2 stretches are compositionally biased toward acidic residues: residues I626–D658 and D799–A850.

Its subcellular location is the cytoplasm. The sequence is that of PH domain-containing protein YHR131C from Saccharomyces cerevisiae (strain ATCC 204508 / S288c) (Baker's yeast).